The sequence spans 323 residues: tRNA U34 carboxymethyltransferase (323 aa).

Residues K91, W105, K110, G130, 152–154 (DPT), 181–182 (IE), M196, Y200, and R315 each bind carboxy-S-adenosyl-L-methionine.

This sequence belongs to the class I-like SAM-binding methyltransferase superfamily. CmoB family. As to quaternary structure, homotetramer.

It catalyses the reaction carboxy-S-adenosyl-L-methionine + 5-hydroxyuridine(34) in tRNA = 5-carboxymethoxyuridine(34) in tRNA + S-adenosyl-L-homocysteine + H(+). In terms of biological role, catalyzes carboxymethyl transfer from carboxy-S-adenosyl-L-methionine (Cx-SAM) to 5-hydroxyuridine (ho5U) to form 5-carboxymethoxyuridine (cmo5U) at position 34 in tRNAs. The protein is tRNA U34 carboxymethyltransferase of Escherichia coli O81 (strain ED1a).